The primary structure comprises 182 residues: Adenine phosphoribosyltransferase (182 aa).

It belongs to the purine/pyrimidine phosphoribosyltransferase family. Homodimer.

It is found in the cytoplasm. It catalyses the reaction AMP + diphosphate = 5-phospho-alpha-D-ribose 1-diphosphate + adenine. It participates in purine metabolism; AMP biosynthesis via salvage pathway; AMP from adenine: step 1/1. In terms of biological role, catalyzes a salvage reaction resulting in the formation of AMP, that is energically less costly than de novo synthesis. This chain is Adenine phosphoribosyltransferase, found in Shewanella frigidimarina (strain NCIMB 400).